A 446-amino-acid polypeptide reads, in one-letter code: Na(+)/H(+) antiporter NhaA (446 aa).

The next 11 helical transmembrane spans lie at 23–43 (GGML…SPWG), 73–93 (LMTF…GLEI), 109–129 (LLPI…YYFM), 138–158 (GLAI…SLFG), 167–187 (VFLT…IALF), 193–213 (SVNY…GNFF), 219–239 (WFYI…GIHA), 314–334 (MVNY…SLTA), 348–368 (VLAG…WLVI), 381–401 (WVNL…SLFI), and 419–439 (GVIL…QFAL).

It belongs to the NhaA Na(+)/H(+) (TC 2.A.33) antiporter family.

Its subcellular location is the cell inner membrane. It carries out the reaction Na(+)(in) + 2 H(+)(out) = Na(+)(out) + 2 H(+)(in). In terms of biological role, na(+)/H(+) antiporter that extrudes sodium in exchange for external protons. The polypeptide is Na(+)/H(+) antiporter NhaA (Phocaeicola vulgatus (strain ATCC 8482 / DSM 1447 / JCM 5826 / CCUG 4940 / NBRC 14291 / NCTC 11154) (Bacteroides vulgatus)).